The sequence spans 346 residues: MDEMHSSDTLLLRTPKSKKKIGLVIPSTPSKKCKYSSGFIAEDTTPSKRFRLYQAKFKTSSKNVKAQTLSVSIKKNQGEITNPFMTEGYNDYRNIVSPGLSFDNDCFSEHELVSPLSDISSINSTSPDVEKIDSLDPFGVDSFVWNCKPLVNKEALELHRMIHSSFPMSPLESNSDVPLLLPKLKKRLSPVNRSTFKPTRYEPSHRLLKPKKSILTVPAKSLNLIVSSSRGSLNDATIFATEINSTLSNEENKLPAISSIWEKLTIPVNSSIKEKYKKLKDQIYGQASNFGEDEDNEEDNEDDLPDAAVIRGYEFQSGRRDELTQCNELQSTKDYKKVQWAKVLEQ.

Residues 289–308 (NFGEDEDNEEDNEDDLPDAA) form a disordered region. Residues 291–305 (GEDEDNEEDNEDDLP) show a composition bias toward acidic residues.

Its subcellular location is the nucleus. Probable transcription factor required for superficial pseudohyphal development in response to nitrogen starvation. The chain is Superficial pseudohyphal growth protein 1 (SFG1) from Saccharomyces cerevisiae (strain ATCC 204508 / S288c) (Baker's yeast).